Here is a 395-residue protein sequence, read N- to C-terminus: Phosphoglycerate kinase (395 aa).

Substrate contacts are provided by residues 21–23 (DLN), Arg-36, 59–62 (HLGR), Arg-113, and Arg-146. Residues Lys-197, Glu-324, and 350–353 (GGDT) contribute to the ATP site.

Belongs to the phosphoglycerate kinase family. As to quaternary structure, monomer.

The protein resides in the cytoplasm. It catalyses the reaction (2R)-3-phosphoglycerate + ATP = (2R)-3-phospho-glyceroyl phosphate + ADP. It participates in carbohydrate degradation; glycolysis; pyruvate from D-glyceraldehyde 3-phosphate: step 2/5. The polypeptide is Phosphoglycerate kinase (Acinetobacter baumannii (strain ATCC 17978 / DSM 105126 / CIP 53.77 / LMG 1025 / NCDC KC755 / 5377)).